The chain runs to 145 residues: Salt stress-induced protein (145 aa).

Residues 3 to 145 (LVKIGLWGGN…IDAIGIYVHP (143 aa)) enclose the Jacalin-type lectin domain. Tandem repeats lie at residues 6–15 (IGLWGGNGGS) and 54–64 (IGPWGGGEGTS). The segment at 6–64 (IGLWGGNGGSAQDISVPPKKLLGVTIYSSDAIRSIAFNYIGVDGQEYAIGPWGGGEGTS) is 2 X approximate repeats, Gly-rich.

Sheaths and roots from mature plants and seedlings.

The protein is Salt stress-induced protein (SALT) of Oryza sativa subsp. indica (Rice).